The primary structure comprises 291 residues: uncharacterized protein (291 aa).

NAD(+)-binding positions include 5–19 (AFIG…MAGH) and Thr-97. Lys-172 is a catalytic residue. Lys-240 lines the NAD(+) pocket.

This sequence belongs to the HIBADH-related family.

This is an uncharacterized protein from Shewanella frigidimarina (strain NCIMB 400).